We begin with the raw amino-acid sequence, 308 residues long: Homoserine O-acetyltransferase (308 aa).

The active-site Acyl-thioester intermediate is the Cys-142. The substrate site is built by Lys-163 and Ser-192. His-235 acts as the Proton acceptor in catalysis. Glu-237 is a catalytic residue. Arg-249 serves as a coordination point for substrate.

This sequence belongs to the MetA family.

Its subcellular location is the cytoplasm. The catalysed reaction is L-homoserine + acetyl-CoA = O-acetyl-L-homoserine + CoA. The protein operates within amino-acid biosynthesis; L-methionine biosynthesis via de novo pathway; O-acetyl-L-homoserine from L-homoserine: step 1/1. Functionally, transfers an acetyl group from acetyl-CoA to L-homoserine, forming acetyl-L-homoserine. The chain is Homoserine O-acetyltransferase from Agrobacterium fabrum (strain C58 / ATCC 33970) (Agrobacterium tumefaciens (strain C58)).